Reading from the N-terminus, the 314-residue chain is Flotillin-like protein FloA (314 aa).

The chain crosses the membrane as a helical span at residues 4-24 (IGPIIIAVLIIIFLIVFFTLV).

It belongs to the flotillin-like FloA family. In terms of assembly, homooligomerizes.

It is found in the cell membrane. It localises to the membrane raft. In terms of biological role, found in functional membrane microdomains (FMM) that may be equivalent to eukaryotic membrane rafts. FMMs are highly dynamic and increase in number as cells age. Flotillins are thought to be important factors in membrane fluidity. This Listeria innocua serovar 6a (strain ATCC BAA-680 / CLIP 11262) protein is Flotillin-like protein FloA.